Consider the following 355-residue polypeptide: Anthranilate phosphoribosyltransferase (355 aa).

5-phospho-alpha-D-ribose 1-diphosphate is bound by residues glycine 102, 105–106 (GD), serine 110, 112–115 (NIST), 130–138 (KHGNRSVSS), and serine 142. An anthranilate-binding site is contributed by glycine 102. Serine 114 is a binding site for Mg(2+). Asparagine 133 contacts anthranilate. Arginine 188 lines the anthranilate pocket. 2 residues coordinate Mg(2+): aspartate 246 and glutamate 247.

This sequence belongs to the anthranilate phosphoribosyltransferase family. Homodimer. Requires Mg(2+) as cofactor.

It catalyses the reaction N-(5-phospho-beta-D-ribosyl)anthranilate + diphosphate = 5-phospho-alpha-D-ribose 1-diphosphate + anthranilate. Its pathway is amino-acid biosynthesis; L-tryptophan biosynthesis; L-tryptophan from chorismate: step 2/5. Catalyzes the transfer of the phosphoribosyl group of 5-phosphorylribose-1-pyrophosphate (PRPP) to anthranilate to yield N-(5'-phosphoribosyl)-anthranilate (PRA). The chain is Anthranilate phosphoribosyltransferase from Pectobacterium carotovorum subsp. carotovorum (strain PC1).